We begin with the raw amino-acid sequence, 289 residues long: Elongation factor Ts (289 aa).

The segment at 80–83 (TDFV) is involved in Mg(2+) ion dislocation from EF-Tu.

It belongs to the EF-Ts family.

Its subcellular location is the cytoplasm. Associates with the EF-Tu.GDP complex and induces the exchange of GDP to GTP. It remains bound to the aminoacyl-tRNA.EF-Tu.GTP complex up to the GTP hydrolysis stage on the ribosome. The protein is Elongation factor Ts of Francisella tularensis subsp. tularensis (strain FSC 198).